A 616-amino-acid polypeptide reads, in one-letter code: Dihydroxy-acid dehydratase (616 aa).

Asp81 lines the Mg(2+) pocket. Cys122 provides a ligand contact to [2Fe-2S] cluster. 2 residues coordinate Mg(2+): Asp123 and Lys124. An N6-carboxylysine modification is found at Lys124. Cys195 provides a ligand contact to [2Fe-2S] cluster. Glu491 is a binding site for Mg(2+). The active-site Proton acceptor is the Ser517.

This sequence belongs to the IlvD/Edd family. As to quaternary structure, homodimer. It depends on [2Fe-2S] cluster as a cofactor. Requires Mg(2+) as cofactor.

It catalyses the reaction (2R)-2,3-dihydroxy-3-methylbutanoate = 3-methyl-2-oxobutanoate + H2O. The enzyme catalyses (2R,3R)-2,3-dihydroxy-3-methylpentanoate = (S)-3-methyl-2-oxopentanoate + H2O. It participates in amino-acid biosynthesis; L-isoleucine biosynthesis; L-isoleucine from 2-oxobutanoate: step 3/4. It functions in the pathway amino-acid biosynthesis; L-valine biosynthesis; L-valine from pyruvate: step 3/4. Functions in the biosynthesis of branched-chain amino acids. Catalyzes the dehydration of (2R,3R)-2,3-dihydroxy-3-methylpentanoate (2,3-dihydroxy-3-methylvalerate) into 2-oxo-3-methylpentanoate (2-oxo-3-methylvalerate) and of (2R)-2,3-dihydroxy-3-methylbutanoate (2,3-dihydroxyisovalerate) into 2-oxo-3-methylbutanoate (2-oxoisovalerate), the penultimate precursor to L-isoleucine and L-valine, respectively. The sequence is that of Dihydroxy-acid dehydratase from Escherichia coli O17:K52:H18 (strain UMN026 / ExPEC).